The sequence spans 262 residues: tRNA pseudouridine synthase A (262 aa).

Catalysis depends on Asp51, which acts as the Nucleophile. Tyr109 contributes to the substrate binding site.

This sequence belongs to the tRNA pseudouridine synthase TruA family. In terms of assembly, homodimer.

It carries out the reaction uridine(38/39/40) in tRNA = pseudouridine(38/39/40) in tRNA. Functionally, formation of pseudouridine at positions 38, 39 and 40 in the anticodon stem and loop of transfer RNAs. This Actinobacillus pleuropneumoniae serotype 5b (strain L20) protein is tRNA pseudouridine synthase A.